The following is a 166-amino-acid chain: Cyanate hydratase (166 aa).

Residues Arg106, Glu109, and Ser132 contribute to the active site.

It belongs to the cyanase family.

It catalyses the reaction cyanate + hydrogencarbonate + 3 H(+) = NH4(+) + 2 CO2. Functionally, catalyzes the reaction of cyanate with bicarbonate to produce ammonia and carbon dioxide. The polypeptide is Cyanate hydratase (Verticillium alfalfae (strain VaMs.102 / ATCC MYA-4576 / FGSC 10136) (Verticillium wilt of alfalfa)).